A 338-amino-acid polypeptide reads, in one-letter code: Glyceraldehyde-3-phosphate dehydrogenase (338 aa).

NAD(+) is bound by residues 13–14 (RI), D35, and R80. D-glyceraldehyde 3-phosphate contacts are provided by residues 151–153 (SCT), T182, 211–212 (TG), and R234. C152 acts as the Nucleophile in catalysis. N316 provides a ligand contact to NAD(+).

This sequence belongs to the glyceraldehyde-3-phosphate dehydrogenase family. Homotetramer.

Its subcellular location is the cytoplasm. It catalyses the reaction D-glyceraldehyde 3-phosphate + phosphate + NAD(+) = (2R)-3-phospho-glyceroyl phosphate + NADH + H(+). The protein operates within carbohydrate degradation; glycolysis; pyruvate from D-glyceraldehyde 3-phosphate: step 1/5. The chain is Glyceraldehyde-3-phosphate dehydrogenase (GPDA) from Colletotrichum gloeosporioides (Anthracnose fungus).